We begin with the raw amino-acid sequence, 307 residues long: Voltage-dependent anion channel-forming protein alr2987 (307 aa).

Transmembrane regions (helical) follow at residues Val19 to Leu39, Val47 to Phe67, Pro209 to Phe229, and Trp238 to Leu258.

This sequence belongs to the anion channel-forming bestrophin (TC 1.A.46) family.

It is found in the cell membrane. In Nostoc sp. (strain PCC 7120 / SAG 25.82 / UTEX 2576), this protein is Voltage-dependent anion channel-forming protein alr2987.